The primary structure comprises 104 residues: Large ribosomal subunit protein uL23 (104 aa).

The protein belongs to the universal ribosomal protein uL23 family. As to quaternary structure, part of the 50S ribosomal subunit. Contacts protein L29, and trigger factor when it is bound to the ribosome.

Functionally, one of the early assembly proteins it binds 23S rRNA. One of the proteins that surrounds the polypeptide exit tunnel on the outside of the ribosome. Forms the main docking site for trigger factor binding to the ribosome. The chain is Large ribosomal subunit protein uL23 from Paraburkholderia phymatum (strain DSM 17167 / CIP 108236 / LMG 21445 / STM815) (Burkholderia phymatum).